The following is a 199-amino-acid chain: Melanocortin-2 receptor accessory protein 2B (199 aa).

The N-linked (GlcNAc...) asparagine glycan is linked to Asn6. A helical transmembrane segment spans residues 39–59; sequence IVIGFWVGLAVFVIFMFFVLT.

This sequence belongs to the MRAP family. As to quaternary structure, interacts with mc4r. As to expression, expressed in adult brain.

It is found in the cell membrane. The protein localises to the endoplasmic reticulum membrane. Its function is as follows. Activator of melanocortin receptor 4 (mc4r), a receptor involved in energy homeostasis. Plays a role after larval development in the control of energy homeostasis and body weight regulation by increasing ligand-sensitivity of mc4r and mc4r-mediated generation of cAMP once the zebrafish begins feeding, increasing the capacity for regulated feeding and growth. The protein is Melanocortin-2 receptor accessory protein 2B (mrap2b) of Danio rerio (Zebrafish).